The following is a 57-amino-acid chain: Large ribosomal subunit protein bL32c (57 aa).

The protein belongs to the bacterial ribosomal protein bL32 family.

It localises to the plastid. The protein localises to the chloroplast. In Liriodendron tulipifera (Tuliptree), this protein is Large ribosomal subunit protein bL32c.